We begin with the raw amino-acid sequence, 215 residues long: Adenylate kinase (215 aa).

Position 10-15 (10-15 (GSGKGT)) interacts with ATP. The interval 30–59 (STGDLFRTNIENDTPLGKEIKQIVENGQLV) is NMP. AMP-binding positions include Thr31, Arg36, 57–59 (QLV), 85–88 (GFPR), and Gln92. The segment at 121–158 (GRRICQSCCKIFNIYTLPTKEKEICDFCQGILYQRKDD) is LID. An ATP-binding site is contributed by Arg122. Cys125 and Cys128 together coordinate Zn(2+). 131-132 (IF) contacts ATP. 2 residues coordinate Zn(2+): Cys145 and Cys148. AMP-binding residues include Arg155 and Arg166. Lys194 lines the ATP pocket.

The protein belongs to the adenylate kinase family. In terms of assembly, monomer.

Its subcellular location is the cytoplasm. The enzyme catalyses AMP + ATP = 2 ADP. Its pathway is purine metabolism; AMP biosynthesis via salvage pathway; AMP from ADP: step 1/1. Functionally, catalyzes the reversible transfer of the terminal phosphate group between ATP and AMP. Plays an important role in cellular energy homeostasis and in adenine nucleotide metabolism. In Borrelia recurrentis (strain A1), this protein is Adenylate kinase.